Here is a 124-residue protein sequence, read N- to C-terminus: Bactoprenol-linked glucose translocase (124 aa).

A run of 4 helical transmembrane segments spans residues 12-32, 45-65, 75-95, and 96-116; these read FFSY…VFYA, NIVG…RCSF, FIFI…FDLL, and ALSP…LGYC.

The protein belongs to the GtrA family.

It localises to the cell membrane. The protein operates within bacterial outer membrane biogenesis; lipopolysaccharide biosynthesis. In terms of biological role, involved in O antigen modification. Involved in the translocation of bactoprenol-linked glucose across the cytoplasmic membrane. The protein is Bactoprenol-linked glucose translocase (rfbI) of Shigella flexneri.